The chain runs to 192 residues: Sarcoplasmic calcium-binding protein 1 (192 aa).

Position 1 is an N-acetylalanine (Ala1). EF-hand domains are found at residues 4–39 (WDNR…NTLI), 56–91 (IMSN…VCVG), 100–135 (AFKV…RSAF), and 136–171 (ANIK…YAQF). The Ca(2+) site is built by Asp17, Asp19, Asn21, Asp28, Asp69, Asn71, Asp73, Glu75, Glu80, Asp113, Asn115, Asp117, and Glu124.

As to quaternary structure, SCPs from crayfish, lobster, and shrimp are polymorphic dimers.

Like parvalbumins, SCPs seem to be more abundant in fast contracting muscles, but no functional relationship can be established from this distribution. The polypeptide is Sarcoplasmic calcium-binding protein 1 (Astacus leptodactylus (Turkish narrow-clawed crayfish)).